The following is a 424-amino-acid chain: Subtilisin-like protease 2 (424 aa).

A signal peptide spans 1–17 (MQLLNLGLLLLLPFVAG). The propeptide occupies 18-123 (EIAPQPEPLR…VHPDQHVYLA (106 aa)). In terms of domain architecture, Inhibitor I9 spans 37 to 123 (QYIVTLKEGL…VHPDQHVYLA (87 aa)). A Peptidase S8 domain is found at 132–424 (RWGLGYMSSK…RKFTLPKNTK (293 aa)). Residues D170 and H202 each act as charge relay system in the active site. N-linked (GlcNAc...) asparagine glycans are attached at residues N249, N262, and N350. The active-site Charge relay system is the S359. An N-linked (GlcNAc...) asparagine glycan is attached at N390.

The protein belongs to the peptidase S8 family.

Its subcellular location is the secreted. Its function is as follows. Secreted subtilisin-like serine protease with keratinolytic activity that contributes to pathogenicity. This Arthroderma otae (Microsporum canis) protein is Subtilisin-like protease 2 (SUB2).